A 130-amino-acid polypeptide reads, in one-letter code: Large ribosomal subunit protein eL22 (130 aa).

The tract at residues 1–21 is disordered; that stretch reads MPGKTAQKGGRPSGKGKKKKQ. The Nuclear localization signal signature appears at 17–20; that stretch reads KKKK.

The protein belongs to the eukaryotic ribosomal protein eL22 family.

This is Large ribosomal subunit protein eL22 (RPL22) from Tripneustes gratilla (Hawaian sea urchin).